A 219-amino-acid polypeptide reads, in one-letter code: Phosphatidylserine decarboxylase proenzyme (219 aa).

The Schiff-base intermediate with substrate; via pyruvic acid role is filled by Ser188. Ser188 bears the Pyruvic acid (Ser); by autocatalysis mark.

This sequence belongs to the phosphatidylserine decarboxylase family. PSD-A subfamily. In terms of assembly, heterodimer of a large membrane-associated beta subunit and a small pyruvoyl-containing alpha subunit. It depends on pyruvate as a cofactor. In terms of processing, is synthesized initially as an inactive proenzyme. Formation of the active enzyme involves a self-maturation process in which the active site pyruvoyl group is generated from an internal serine residue via an autocatalytic post-translational modification. Two non-identical subunits are generated from the proenzyme in this reaction, and the pyruvate is formed at the N-terminus of the alpha chain, which is derived from the carboxyl end of the proenzyme. The post-translation cleavage follows an unusual pathway, termed non-hydrolytic serinolysis, in which the side chain hydroxyl group of the serine supplies its oxygen atom to form the C-terminus of the beta chain, while the remainder of the serine residue undergoes an oxidative deamination to produce ammonia and the pyruvoyl prosthetic group on the alpha chain.

It localises to the cell membrane. It catalyses the reaction a 1,2-diacyl-sn-glycero-3-phospho-L-serine + H(+) = a 1,2-diacyl-sn-glycero-3-phosphoethanolamine + CO2. The protein operates within phospholipid metabolism; phosphatidylethanolamine biosynthesis; phosphatidylethanolamine from CDP-diacylglycerol: step 2/2. In terms of biological role, catalyzes the formation of phosphatidylethanolamine (PtdEtn) from phosphatidylserine (PtdSer). The chain is Phosphatidylserine decarboxylase proenzyme from Trichlorobacter lovleyi (strain ATCC BAA-1151 / DSM 17278 / SZ) (Geobacter lovleyi).